Consider the following 324-residue polypeptide: tRNA pseudouridine synthase B (324 aa).

The active-site Nucleophile is Asp-49. Residues 87 to 107 are disordered; the sequence is RSTDDLEGQPTKTSDKRPSRE.

This sequence belongs to the pseudouridine synthase TruB family. Type 1 subfamily.

The enzyme catalyses uridine(55) in tRNA = pseudouridine(55) in tRNA. Functionally, responsible for synthesis of pseudouridine from uracil-55 in the psi GC loop of transfer RNAs. The protein is tRNA pseudouridine synthase B of Brucella abortus (strain 2308).